Consider the following 488-residue polypeptide: Inosine-5'-monophosphate dehydrogenase (488 aa).

2 consecutive CBS domains span residues 95–153 (VISN…SIKI) and 157–216 (MTKD…AKDE). NAD(+) is bound by residues D250 and 300 to 302 (GIG). Positions 302 and 304 each coordinate K(+). S305 lines the IMP pocket. C307 is a binding site for K(+). Residue C307 is the Thioimidate intermediate of the active site. IMP is bound by residues 340–342 (DGG), 363–364 (GS), and 387–391 (YRGMG). R403 (proton acceptor) is an active-site residue. IMP is bound at residue E417. The segment at 467 to 488 (AGLAESHPHNVQITKESPNYSF) is disordered. The K(+) site is built by E471, S472, and H473. Residues 475–488 (HNVQITKESPNYSF) are compositionally biased toward polar residues.

This sequence belongs to the IMPDH/GMPR family. In terms of assembly, homotetramer. The cofactor is K(+).

The enzyme catalyses IMP + NAD(+) + H2O = XMP + NADH + H(+). The protein operates within purine metabolism; XMP biosynthesis via de novo pathway; XMP from IMP: step 1/1. Mycophenolic acid (MPA) is a non-competitive inhibitor that prevents formation of the closed enzyme conformation by binding to the same site as the amobile flap. In contrast, mizoribine monophosphate (MZP) is a competitive inhibitor that induces the closed conformation. MPA is a potent inhibitor of mammalian IMPDHs but a poor inhibitor of the bacterial enzymes. MZP is a more potent inhibitor of bacterial IMPDH. Its function is as follows. Catalyzes the conversion of inosine 5'-phosphate (IMP) to xanthosine 5'-phosphate (XMP), the first committed and rate-limiting step in the de novo synthesis of guanine nucleotides, and therefore plays an important role in the regulation of cell growth. This chain is Inosine-5'-monophosphate dehydrogenase, found in Staphylococcus epidermidis (strain ATCC 35984 / DSM 28319 / BCRC 17069 / CCUG 31568 / BM 3577 / RP62A).